A 483-amino-acid polypeptide reads, in one-letter code: Protein EFFECTOR OF TRANSCRIPTION 2 (483 aa).

Residues 64–112 (SCPGLYELGVAVIGQEQCRKLEPDIVLASYLGQAESVRSRLQRYGRSGA) form the GIY-YIG domain. 2 Cx9Cx9RCx2HK repeats span residues 278 to 303 (CGVL…IEHK) and 338 to 363 (CGVI…EDHK). The segment covering 380–396 (EKTVKDEKPDPESHTES) has biased composition (basic and acidic residues). Residues 380 to 399 (EKTVKDEKPDPESHTESIEE) form a disordered region. 2 Cx9Cx9RCx2HK repeats span residues 406–431 (CEAT…WQHK) and 453–478 (CGVK…EEHK).

As to expression, expressed in vascular tissues of stems, hypocotyls, leaves and flowers. Expressed in the vascular bundles of xylem in shoot parenchyma cells. Expressed in the remnant cytoplasm of differentiated fiber cells and in protoxylem element of parenchymal cells.

It localises to the cytoplasm. The protein resides in the nucleus. In terms of biological role, transcriptional regulator involved in the regulation of cell differentiation in meristems. Probably regulates the expression of various KNAT genes involved in the maintenance of the cells in an undifferentiated, merismastic state. Plays a role in the regulation of gibberellin 20 oxidase and the gibberellin-regulated protein GASA4. Localizes in the nucleus during the cellular differentiation state and may act via a single strand cutting domain. Transcriptional regulator required for the induction of dormancy during late seed development. Interacts genetically with FUS3 and may be component of the same regulatory pathway during embryogenesis. Binds both linear and supercoiled DNA without sequence preference. In Arabidopsis thaliana (Mouse-ear cress), this protein is Protein EFFECTOR OF TRANSCRIPTION 2.